The following is a 140-amino-acid chain: ATP synthase epsilon chain 1 (140 aa).

This sequence belongs to the ATPase epsilon chain family. As to quaternary structure, F-type ATPases have 2 components, CF(1) - the catalytic core - and CF(0) - the membrane proton channel. CF(1) has five subunits: alpha(3), beta(3), gamma(1), delta(1), epsilon(1). CF(0) has three main subunits: a, b and c.

The protein resides in the cell inner membrane. In terms of biological role, produces ATP from ADP in the presence of a proton gradient across the membrane. This is ATP synthase epsilon chain 1 from Photobacterium profundum (strain SS9).